Reading from the N-terminus, the 242-residue chain is Ferritin, mitochondrial (242 aa).

The N-terminal 49 residues, 1–49 (MLSCFRLLSRHISPSLASLRPVRCCFALPLRWAPGRPLDPRQIAPRRPL), are a transit peptide targeting the mitochondrion. The segment covering 47 to 58 (RPLAAAASSRDP) has biased composition (low complexity). Residues 47 to 71 (RPLAAAASSRDPTGPAAGPSRVRQN) form a disordered region. Residues 70–219 (QNFHPDSEAA…DHVHNLVKMG (150 aa)) form the Ferritin-like diiron domain. 5 residues coordinate Fe cation: E87, E122, H125, E167, and Q201.

It belongs to the ferritin family. In terms of assembly, homooligomer of 24 subunits. The functional molecule is roughly spherical and contains a central cavity into which the polymeric mineral iron core is deposited. Detected in testis and erythroleukemia. Expression is very low or not detectable in brain, colon, heart, kidney, liver, lung, muscle, placental, spleen and small intestine.

It is found in the mitochondrion. It catalyses the reaction 4 Fe(2+) + O2 + 4 H(+) = 4 Fe(3+) + 2 H2O. Catalyzes the oxidation of ferrous iron(II) to ferric iron(III) and stores iron in a soluble, non-toxic, readily available form. Important for iron homeostasis. Iron is taken up in the ferrous form and deposited as ferric hydroxides after oxidation. The chain is Ferritin, mitochondrial from Homo sapiens (Human).